The primary structure comprises 630 residues: Internalin B (630 aa).

The first 30 residues, 1–30, serve as a signal peptide directing secretion; that stretch reads MKEKHNPRRKYCLISGLAIIFSLWIIIGNG. Positions 31–76 constitute an LRRNT domain; it reads AKVQAETITVPTPIKQIFSDDAFAETIKDNLKKKSVTDAVTQNELN. LRR repeat units lie at residues 75–97, 98–121, 123–141, 142–163, 164–187, 189–207, and 208–231; these read LNSIDQIIANNSDIKSVQGIQYL, PNVTKLFLNGNKLTDIKPLANLKN, GWLFLDENKVKDLSSLKDL, KKLKSLSLEHNGISDINGLVHL, PQLESLYLGNNKITDITVLSRLTK, DTLSLEDNQISDIVPLAGL, and TKLQNLYLSKNHISDLRALAGLKN. Residues 241 to 319 are ig-like region; sequence ECLNKPINHQ…RFHGRVTQPL (79 aa). The 90-residue stretch at 241–330 folds into the LRRCT domain; it reads ECLNKPINHQ…EVYTVSYDVD (90 aa). Positions 320–392 are b repeat region; sequence KEVYTVSYDV…TLYAVFKAET (73 aa). GW domains lie at 393-467, 472-550, and 553-630; these read TEKA…LDRY, YDKG…TFYK, and MEKP…RAQK. A GW repeat region, necessary and sufficient for cell surface attachment, interacts with host C1QBP and with heparin region spans residues 399-630; that stretch reads LTRYVKYIRG…TKAANLRAQK (232 aa).

The protein belongs to the internalin family. As to quaternary structure, interacts via its LRR repeats plus the Ig-like region with the extracellular portion (residues 25-741) of its receptor MET; MET can bind HGF, its endogenous ligand, and InlB simultaneously. Probably forms a dimer upon interaction with host MET, which subsequently allows dimerization of the host MET and subsequent host signaling; dimerization probably occurs via the convex surface of InlB. Prevention of dimerization does not block interaction with MET but prevents downstream action.

The protein localises to the secreted. It is found in the cytoplasm. The protein resides in the cell membrane. In terms of biological role, mediates the entry of L.monocytogenes into normally non-phagocytic mammalian host cells. Its host receptor is hepatocyte growth factor receptor (HGF receptor, a tyrosine kinase, MET) which is tyrosine-phosphorylated in response to InlB. Downstream targets MAPK1/MAPK3 (Erk1/2) and AKT are phosphorylated in response to InlB, which also causes cell colony scattering. Complement component 1 Q subcomponent-binding protein (gC1q-R, C1QBP) has been suggested to also act an InlB receptor, but this is less certain. Stimulation of Tyr-phosphorylation of MET by InlB is potentiated by the InlB GW domains and glycosaminoglycans such as heparin. This is Internalin B (inlB) from Listeria monocytogenes serovar 1/2a (strain ATCC BAA-679 / EGD-e).